The chain runs to 118 residues: MPRVKRGVQARARHKKVLKQAKGYYGARSRVYRVAVQAVTKAGQYAYRDRRQRKRVFRQLWITRINAASRISGLSYSRFINGLKKASVEIDRKILADIAVFDKATFAHLVEVAKKALA.

Belongs to the bacterial ribosomal protein bL20 family.

Functionally, binds directly to 23S ribosomal RNA and is necessary for the in vitro assembly process of the 50S ribosomal subunit. It is not involved in the protein synthesizing functions of that subunit. In Psychromonas ingrahamii (strain DSM 17664 / CCUG 51855 / 37), this protein is Large ribosomal subunit protein bL20.